Consider the following 82-residue polypeptide: UPF0180 protein BT9727_1277 (82 aa).

This sequence belongs to the UPF0180 family.

The protein is UPF0180 protein BT9727_1277 of Bacillus thuringiensis subsp. konkukian (strain 97-27).